Here is a 215-residue protein sequence, read N- to C-terminus: Chaperone protein TorD (215 aa).

This sequence belongs to the TorD/DmsD family. TorD subfamily.

Its subcellular location is the cytoplasm. Its function is as follows. Involved in the biogenesis of TorA. Acts on TorA before the insertion of the molybdenum cofactor and, as a result, probably favors a conformation of the apoenzyme that is competent for acquiring the cofactor. The chain is Chaperone protein TorD from Shewanella piezotolerans (strain WP3 / JCM 13877).